Reading from the N-terminus, the 96-residue chain is Large ribosomal subunit protein uL23 (96 aa).

The protein belongs to the universal ribosomal protein uL23 family. Part of the 50S ribosomal subunit. Contacts protein L29, and trigger factor when it is bound to the ribosome.

One of the early assembly proteins it binds 23S rRNA. One of the proteins that surrounds the polypeptide exit tunnel on the outside of the ribosome. Forms the main docking site for trigger factor binding to the ribosome. This chain is Large ribosomal subunit protein uL23, found in Oleidesulfovibrio alaskensis (strain ATCC BAA-1058 / DSM 17464 / G20) (Desulfovibrio alaskensis).